The primary structure comprises 761 residues: Isocyanide synthase xanB (761 aa).

The tract at residues L24–H128 is disordered. A compositionally biased stretch (low complexity) spans E36 to E48. Over residues T93–N102 the composition is skewed to polar residues. Over residues F115–P126 the composition is skewed to basic and acidic residues.

This sequence belongs to the isocyanide synthase family.

It functions in the pathway secondary metabolite biosynthesis. Its function is as follows. Isocyanide synthase; part of the gene cluster that mediates the biosynthesis of the isocyanide xanthocillin and its derivatives. The first step of the pathway consists in the conversion of tyrosine into a vinyl-isonitrile intermediate by the isocyanide synthase xanB. Subsequent oxidative dimerization of this intermediate to form xanthocillin may involve the cytochrome P450 monooxygenase xanG, whose expression is coregulated with that of XanB. Xanthocillin can be further modified by the isonitrile hydratase-like protein xanA which introduces N-formyl groups and the methyltransferase xanE which introduces methyl groups, leading to the production of several derivatives including fumiformamide. Finally, fumiformamide can be subject to both oxidative and reductive cyclization to yield melanocins E and F, respectively. The polypeptide is Isocyanide synthase xanB (Aspergillus fumigatus (strain ATCC MYA-4609 / CBS 101355 / FGSC A1100 / Af293) (Neosartorya fumigata)).